A 104-amino-acid chain; its full sequence is uncharacterized protein (104 aa).

An N-terminal signal peptide occupies residues 1–18 (MGVEGMWNVFLFSLQVAA). Asn27 carries an N-linked (GlcNAc...) asparagine; by host glycan.

This is an uncharacterized protein from Fowl adenovirus A serotype 1 (strain CELO / Phelps) (FAdV-1).